A 328-amino-acid polypeptide reads, in one-letter code: Malate dehydrogenase (328 aa).

Residue 16–22 participates in NAD(+) binding; the sequence is GAAGQIS. Arginine 97 and arginine 103 together coordinate substrate. Residues asparagine 110, glutamine 117, and 134-136 each bind NAD(+); that span reads VGN. Substrate is bound by residues asparagine 136 and arginine 167. The active-site Proton acceptor is the histidine 192.

Belongs to the LDH/MDH superfamily. MDH type 2 family.

It carries out the reaction (S)-malate + NAD(+) = oxaloacetate + NADH + H(+). Catalyzes the reversible oxidation of malate to oxaloacetate. This chain is Malate dehydrogenase, found in Corynebacterium glutamicum (strain R).